The primary structure comprises 65 residues: Potassium channel toxin kappa-KTx 2.7 (65 aa).

The signal sequence occupies residues 1–26 (MKTSGTVYVFLLLLAFGIFTDISSAC). Positions 27–39 (SEQMDDEDSYEVE) are excised as a propeptide. 2 cysteine pairs are disulfide-bonded: Cys-45–Cys-63 and Cys-49–Cys-59.

This sequence belongs to the short scorpion toxin superfamily. Potassium channel inhibitor kappa-KTx family. Kappa-KTx 2 subfamily. As to expression, expressed by the venom gland.

It localises to the secreted. Its function is as follows. Weakly inhibits the Kv7.1/KCNQ1 channel (10 uM of the toxin inhibits currents by 17.8%). The chain is Potassium channel toxin kappa-KTx 2.7 from Heterometrus petersii (Asian forest scorpion).